The following is an 856-amino-acid chain: MGRKLDLSGLTDDETEHVLQVVQRDFNLRKKEEDRLSEMKQRLAEENSKCSILSKHQKFVERCCMRCCSPFTFLVNARRRCGECKFSVCKSCCSYQKHEKLWVCCVCQQARLLRTQSLEWFYNNVKTRFKRFGSAKVLKNLYKKHRLESGACFDILGGGLYEPNLENEGSISGSDSTFYRQSEGHSMMDTLAVALQVAEEAIEEAISKAESQRDSLDKQNEASYLRDHRQELAEELAGTILQRIIRKQKDKADLHAEEEEPECTRPQSSGVKARGEGTAAPPGRHKARAALWRSQSAFSFTTEDTLKTSSAEAAPRQPKDRAQRLLEESALPSWRSMDGLDGKNLVPLLQSPDGNWMTLKDSSRQPPTRLLAKPKSRTFQALEVASSVASAYDELGSDSEEDFDYSEALSKLRPPSQGRLKQPQPQPAQAQSSGQGPLATSPSNPEAMCSDSETSSTSSSREAGCRAKLLWLQRKAPKNPSAEKTHLQGELDVNFNPQAAGGETSDSSDPEETLHTADRRARRWRRARVGPEESNRGLPSPSAYPPALHTAQVSDNVSETDISNEAQNSRSSTDSAEEKLRNRLYELAMKMSEKETSSGEDQESESKTEPKNQKGSLSSEENNQGVQEELKKKCSAVSLCNISTEVLKVINATEELIAESAGPWEIPPVSTDRDNGMFPLGTDQRSLDKQLTSLEENVYLAAGTVYGLEGQLSELEDAARCIHSSTGETELADLEDQVAAAAAQVHHAELQISDIESRISALTIAGLNIAPCVRLTRRRDQKQRSQVQTIDTSRQQRRKLPAPPVKAEKIEASSVTPIKTFNRNFLLQGSSTNRPTASTSNTKDLMEPVLESAVMY.

A RabBD domain is found at 4–124; the sequence is KLDLSGLTDD…TQSLEWFYNN (121 aa). The FYVE-type zinc finger occupies 63–105; that stretch reads CCMRCCSPFTFLVNARRRCGECKFSVCKSCCSYQKHEKLWVCC. The interval 143-560 is myosin-binding; that stretch reads KKHRLESGAC…AQVSDNVSET (418 aa). A PKA-binding region spans residues 193–209; sequence VALQVAEEAIEEAISKA. The segment at 232–248 is negative regulation of PKA-binding; sequence LAEELAGTILQRIIRKQ. A disordered region spans residues 251–287; the sequence is KADLHAEEEEPECTRPQSSGVKARGEGTAAPPGRHKA. A Phosphoserine modification is found at serine 299. Polar residues predominate over residues 302–311; sequence TEDTLKTSSA. Disordered regions lie at residues 302-323, 350-376, 392-578, 592-625, 778-805, and 826-845; these read TEDTLKTSSAEAAPRQPKDRAQ, QSPDGNWMTLKDSSRQPPTRLLAKPKS, YDEL…SAEE, SEKETSSGEDQESESKTEPKNQKGSLSSEENNQG, RRDQKQRSQVQTIDTSRQQRRKLPAPPV, and LLQGSSTNRPTASTSNTKDL. At serine 351 the chain carries Phosphoserine. Residues 395 to 405 are compositionally biased toward acidic residues; it reads LGSDSEEDFDY. Low complexity-rich tracts occupy residues 427–437 and 450–460; these read PAQAQSSGQGP and SDSETSSTSSS. The interval 495–856 is actin-binding; sequence FNPQAAGGET…EPVLESAVMY (362 aa). Polar residues-rich tracts occupy residues 551–574, 613–625, 784–793, and 826–843; these read AQVSDNVSETDISNEAQNSRSSTD, QKGSLSSEENNQG, RSQVQTIDTS, and LLQGSSTNRPTASTSNTK.

Binds MYO5A, MYO7A and F-actin. Binds RAB27A that has been activated by GTP-binding via its N-terminus. Interacts with PRKAR2A. Interacts with components of the exocyst complex, including EXOC3 and EXOC4.

The protein localises to the cytoplasm. Its subcellular location is the perinuclear region. It is found in the cytoplasmic vesicle. The protein resides in the secretory vesicle. It localises to the melanosome. Functionally, rab effector protein involved in melanosome transport. Serves as link between melanosome-bound RAB27A and the motor proteins MYO5A and MYO7A. May link RAB27A-containing vesicles to actin filaments. Functions as a protein kinase A-anchoring protein (AKAP). May act as a scaffolding protein that links PKA to components of the exocytosis machinery, thus facilitating exocytosis, including insulin release. This is Rab effector MyRIP (Myrip) from Rattus norvegicus (Rat).